Consider the following 605-residue polypeptide: Elongation factor 4 (605 aa).

Residues 5-187 (ALIRNFSIIA…AVVERIPPPK (183 aa)) enclose the tr-type G domain. GTP-binding positions include 17–22 (DHGKST) and 134–137 (NKID).

It belongs to the TRAFAC class translation factor GTPase superfamily. Classic translation factor GTPase family. LepA subfamily.

It is found in the cell inner membrane. The catalysed reaction is GTP + H2O = GDP + phosphate + H(+). Functionally, required for accurate and efficient protein synthesis under certain stress conditions. May act as a fidelity factor of the translation reaction, by catalyzing a one-codon backward translocation of tRNAs on improperly translocated ribosomes. Back-translocation proceeds from a post-translocation (POST) complex to a pre-translocation (PRE) complex, thus giving elongation factor G a second chance to translocate the tRNAs correctly. Binds to ribosomes in a GTP-dependent manner. The protein is Elongation factor 4 of Novosphingobium aromaticivorans (strain ATCC 700278 / DSM 12444 / CCUG 56034 / CIP 105152 / NBRC 16084 / F199).